A 1046-amino-acid chain; its full sequence is Protein jim lovell (1046 aa).

A disordered region spans residues Thr54 to Ser109. The span at Pro65–Pro75 shows a compositional bias: pro residues. The region spanning Val140 to Gln205 is the BTB domain. Disordered regions lie at residues Leu290 to Ser342, Ala355 to Asp501, Pro632 to Ala655, Glu686 to Ser719, Arg758 to Thr791, Glu851 to Ala947, and Asp998 to Asp1046. Over residues Arg294 to Glu303 the composition is skewed to basic and acidic residues. Positions Pro315 to Arg324 are enriched in basic residues. Polar residues predominate over residues Gln365–Ala380. Positions Leu383 to Glu412 are enriched in basic and acidic residues. Over residues Leu413 to Glu432 the composition is skewed to acidic residues. The segment covering Glu433 to Arg443 has biased composition (basic and acidic residues). A compositionally biased stretch (low complexity) spans Ala445–Ala454. Gly residues predominate over residues Gly636–Cys651. Over residues Asp703 to Phe714 the composition is skewed to pro residues. The span at Leu768 to Gly777 shows a compositional bias: basic residues. In terms of domain architecture, HTH psq-type spans Ala781–Lys833. The segment covering Lys866–Asn881 has biased composition (basic and acidic residues). 2 stretches are compositionally biased toward low complexity: residues Ser882–Gly897 and Leu912–Pro925.

As to expression, initially expressed at blastoderm stage, transient accumulation at dorso-lateral positions of the embryo and differences along the longitudinal axis. At later stages of embryogenesis, expression is found exclusively in neural anlagen. Expressed in 4 posterior-most ventral unpaired median interneurons (VUM) neurons, VUM interneurons and one progeny of the median neuroblast (MNB).

The protein localises to the nucleus. In terms of biological role, has a regulatory role during midline cell development. The protein is Protein jim lovell (lov) of Drosophila melanogaster (Fruit fly).